Reading from the N-terminus, the 68-residue chain is TxMMSK-03 (68 aa).

The signal sequence occupies residues 1–19 (MSKLGALLIICLLLFPLTA). Positions 20 to 50 (VPMDGDQPADRPAERMQDDISFEQHPMFDAT) are excised as a propeptide. 3 disulfides stabilise this stretch: Cys-53-Cys-67, Cys-54-Cys-63, and Cys-59-Cys-66. Pro-65 carries the 4-hydroxyproline; partial modification.

Contains 3 disulfide bonds. In terms of tissue distribution, expressed by the venom duct. Both hydroxylated and non-hydroxylated forms are mostly and only present in part 2 (proximal of the venom bulb) of the venom duct, respectively.

Its subcellular location is the secreted. In Conus textile (Cloth-of-gold cone), this protein is TxMMSK-03.